The primary structure comprises 193 residues: 3-isopropylmalate dehydratase small subunit (193 aa).

Belongs to the LeuD family. LeuD type 1 subfamily. Heterodimer of LeuC and LeuD.

The enzyme catalyses (2R,3S)-3-isopropylmalate = (2S)-2-isopropylmalate. The protein operates within amino-acid biosynthesis; L-leucine biosynthesis; L-leucine from 3-methyl-2-oxobutanoate: step 2/4. Catalyzes the isomerization between 2-isopropylmalate and 3-isopropylmalate, via the formation of 2-isopropylmaleate. The sequence is that of 3-isopropylmalate dehydratase small subunit from Bacillus cereus (strain 03BB102).